A 382-amino-acid polypeptide reads, in one-letter code: Glutamine synthetase cytosolic isozyme (382 aa).

The region spanning 36-118 (GKICAEYVWI…VMCDCYEPPK (83 aa)) is the GS beta-grasp domain. Positions 135–382 (TRFACAEVME…RLIVETTILL (248 aa)) constitute a GS catalytic domain.

It belongs to the glutamine synthetase family. As to quaternary structure, homooctamer.

It localises to the cytoplasm. It carries out the reaction L-glutamate + NH4(+) + ATP = L-glutamine + ADP + phosphate + H(+). In Chlamydomonas reinhardtii (Chlamydomonas smithii), this protein is Glutamine synthetase cytosolic isozyme (GLN1).